A 519-amino-acid polypeptide reads, in one-letter code: MEKDTEELELENAVFGNINNFSSFLDKENETFDVMMNEAPELSEDNDAQEDELEKLEDAELFMFDTGSADGAKDSVPLDIIAGDNTVKEDEEASNEIPSIWEDSDDERLMISLQDHSRLRKLRQYEDEDMVNGLQYARRLRTQFERVYPVPEWAKKQDVTEEEDEFNALSEKSVIPKSLKSLFKSSVSYINQSSKLLAPGTINIKRLKDANFQAPSHSGIRCMSIHPYFPLLLTCGFDRTLRIYQLDGKVNPLVTSLHLRSSALQTALFHPDGKRVIAAGRRKYMYIWDLESAQVQKVSRMYGQENFQPSMERFHVDPTGKYIALEGRSGHINLLHALTGQFATSFKIEGVLSDVLFTSDGSEMLVLSYGAEVWHFNVEQRSVVRRWQVQDGVSTTHFCLDPSNKYLAIGSKSGIVNIYDLQTSNADAAPKPVTTLDNITFSINSMSFSQDSQVLAIASRGKKDTLRLVHVPSFSVFRNWPTSATPLGRVTCLAFGKGGELCVGNEAGRVGLWKLAHYD.

WD repeat units lie at residues 26–66 (DKEN…MFDT), 71–111 (GAKD…RLMI), 216–254 (SHSGIRCMSIHPYFPLLLTCGFDRTLRIYQLDGKVNPLV), 259–298 (LRSSALQTALFHPDGKRVIAAGRRKYMYIWDLESAQVQKV), 306–345 (NFQPSMERFHVDPTGKYIALEGRSGHINLLHALTGQFATS), 347–386 (KIEGVLSDVLFTSDGSEMLVLSYGAEVWHFNVEQRSVVRR), 390–429 (QDGVSTTHFCLDPSNKYLAIGSKSGIVNIYDLQTSNADAA), 438–479 (NITF…VFRN), and 485–519 (TPLGRVTCLAFGKGGELCVGNEAGRVGLWKLAHYD).

The protein belongs to the WD repeat UTP18 family. As to quaternary structure, component of the ribosomal small subunit (SSU) processome.

It localises to the nucleus. The protein resides in the nucleolus. In terms of biological role, involved in nucleolar processing of pre-18S ribosomal RNA. In Schizosaccharomyces pombe (strain 972 / ATCC 24843) (Fission yeast), this protein is Probable U3 small nucleolar RNA-associated protein 18.